The sequence spans 195 residues: 3-isopropylmalate dehydratase small subunit (195 aa).

The protein belongs to the LeuD family. LeuD type 1 subfamily. In terms of assembly, heterodimer of LeuC and LeuD.

It catalyses the reaction (2R,3S)-3-isopropylmalate = (2S)-2-isopropylmalate. The protein operates within amino-acid biosynthesis; L-leucine biosynthesis; L-leucine from 3-methyl-2-oxobutanoate: step 2/4. Functionally, catalyzes the isomerization between 2-isopropylmalate and 3-isopropylmalate, via the formation of 2-isopropylmaleate. The chain is 3-isopropylmalate dehydratase small subunit from Koribacter versatilis (strain Ellin345).